The following is a 211-amino-acid chain: Uridine kinase (211 aa).

15–22 (GGSGSGKT) contributes to the ATP binding site.

It belongs to the uridine kinase family.

The protein localises to the cytoplasm. It carries out the reaction uridine + ATP = UMP + ADP + H(+). The catalysed reaction is cytidine + ATP = CMP + ADP + H(+). It functions in the pathway pyrimidine metabolism; CTP biosynthesis via salvage pathway; CTP from cytidine: step 1/3. Its pathway is pyrimidine metabolism; UMP biosynthesis via salvage pathway; UMP from uridine: step 1/1. This Lactobacillus helveticus (strain DPC 4571) protein is Uridine kinase.